The chain runs to 48 residues: Large ribosomal subunit protein bL32 (48 aa).

Basic residues predominate over residues 1-20; it reads MAVPKRRVSKTRAAKRRTHY. The tract at residues 1 to 48 is disordered; the sequence is MAVPKRRVSKTRAAKRRTHYKVSLPMPIKDKDGSYKMPHRANPTTKEY.

Belongs to the bacterial ribosomal protein bL32 family.

This is Large ribosomal subunit protein bL32 (rpmF) from Campylobacter jejuni subsp. jejuni serotype O:2 (strain ATCC 700819 / NCTC 11168).